We begin with the raw amino-acid sequence, 881 residues long: NACHT, LRR and PYD domains-containing protein 6 (881 aa).

Positions 1 to 129 (MDAAGASCSS…EHVLRQHAKV (129 aa)) constitute a Pyrin domain. At serine 104 the chain carries Phosphoserine. The tract at residues 154 to 175 (AGEDELLGTSGEPEPERARRSD) is disordered. One can recognise an NACHT domain in the interval 194 to 510 (LTVVLQGPAG…EFLAALSYLL (317 aa)). 200–207 (GPAGIGKT) contacts ATP. The stretch at 459–484 (EKDLERLKLQGSQVQTMFLSKKELPG) is one LRR 1 repeat. Positions 579 to 611 (QSQPKVATVGAEKKDELKDEEAEEEEEEEEEEE) are disordered. A compositionally biased stretch (acidic residues) spans 596–611 (KDEEAEEEEEEEEEEE). LRR repeat units follow at residues 637 to 660 (LSSL…VLSY), 749 to 772 (APSL…LLSQ), and 839 to 863 (TLSL…TLKP).

Belongs to the NLRP family. As to quaternary structure, homomultimer; forms the NLRP6 inflammasome polymeric complex, a filament composed of homopolymers in response to pathogens and other damage-associated signals. The core of NLRP6 inflammasomes consists of a signal sensor component (NLRP6), an adapter (PYCARD/ASC), which recruits effector pro-inflammatory caspases (CASP1 and CASP4). Interacts (via pyrin domain) with PYCARD/ASC (via pyrin domain); interaction takes place following NLRP6 activation and formation of liquid-liquid phase separation (LLPS), initiating nucleation which greatly enhances further addition of soluble PYCARD/ASC molecules to the speck in a prion-like polymerization process. Clustered PYCARD/ASC nucleates the formation of CASP1 (or possibly CASP4) filaments through the interaction of their respective CARD domains, acting as a platform for CASP1 polymerization. CASP1 filament formation increases local enzyme concentration, resulting in trans-autocleavage and activation. Active CASP1 then processes IL1B and IL18 precursors, leading to the release of mature cytokines in the extracellular milieu and inflammatory response. Interacts with DHX15. Polyubiquitinated with 'Lys-63'-linked chains, promoting the interaction with PYCARD/ASC and formation of the NLRP6 inflammasome. Deubiquitination by CYLD decreases the interaction with PYCARD/ASC. In terms of tissue distribution, detected in several tissues. Expressed in renal epithelial cells in medullary thick ascending limb of Henle, as well as in salivary gland apical epithelium (at protein level). Isoform 1 is widely expressed. Isoform 2 is primarily expressed in kidney (at protein level).

The protein localises to the cytoplasm. Its subcellular location is the inflammasome. It localises to the cell membrane. The protein resides in the nucleus membrane. In terms of biological role, acts as the sensor component of the NLRP6 inflammasome, which mediates inflammasome activation in response to various pathogen-associated signals, leading to maturation and secretion of IL1B and IL18. Inflammasomes are supramolecular complexes that assemble in the cytosol in response to pathogens and other damage-associated signals and play critical roles in innate immunity and inflammation. Acts as a recognition receptor (PRR): recognizes and binds specific pathogens and other damage-associated signals, such as lipoteichoic acid (LTA), a cell-wall component of Gram-positive bacteria, or double stranded RNA (dsRNA). May also recognize and bind lipopolysaccharide (LPS), a major component of the outer membrane of Gram-negative bacteria; however, LPS is probably not a major activator of the NLRP6 inflammasome. Following LTA- or dsRNA-binding, NLRP6 undergoes liquid-liquid phase separation (LLPS), enhancing multivalent interactions, an essential step for the formation of the NLRP6 inflammasome polymeric complex. The NLRP6 inflammasome acts by promoting recruitment of effector pro-inflammatory caspases (CASP1 and/or CASP4) that catalyze maturation and secretion of IL1B and IL18 in the extracellular milieu. The NLRP6 inflammasome plays a central role in the maintenance of epithelial integrity and host defense against microbial infections in the intestine. Required to restrict infection against Gram-positive bacteria by recognizing lipoteichoic acid (LTA), leading to recruitment of CASP4 and CASP1, and subsequent maturation and secretion of IL1B and IL18. Involved in intestinal antiviral innate immunity together with DHX15: recognizes and binds viral dsRNA to restrict infection by enteric viruses through the interferon pathway and GSDMD-dependent release of IL18. Required to prevent infection by the apicomplexan parasite Cryptosporidium in enterocytes by promoting GSDMD-dependent release of IL18. The NLRP6 inflammasome may also regulate the gut microbiota composition by acting as a sensor of microbiota-associated metabolites to form a PYCARD/ASC-dependent inflammasome for downstream IL18 release and secretion of antimicrobial peptides. Essential for gut mucosal self-renewal and proliferation. Regulate mucus secretion in an inflammasome- and autophagy-dependent manner to prevent invasion by enteric bacteria,. During systemic bacterial infections, the NLRP6 inflammasome negatively regulates neutrophil recruitment and neutrophil extracellular traps (NETs) formation. May promote peripheral nerve recovery following injury via an inflammasome-independent mechanism. The polypeptide is NACHT, LRR and PYD domains-containing protein 6 (Rattus norvegicus (Rat)).